A 477-amino-acid chain; its full sequence is Tyrosine--tRNA ligase, mitochondrial (477 aa).

The N-terminal 16 residues, 1-16 (MAAPILRSFSWGRWSG), are a transit peptide targeting the mitochondrion. An L-tyrosine-binding site is contributed by Tyr-77. Asp-81 provides a ligand contact to ATP. The 'HIGH' region motif lies at 82–91 (PTADSLHVGH). Positions 121, 221, 225, and 228 each coordinate L-tyrosine. 244 to 246 (GSD) provides a ligand contact to ATP. Gln-247 contributes to the L-tyrosine binding site. Positions 274 and 284 each coordinate ATP. The 'KMSKS' region signature appears at 281–285 (KLGKS). Lys-355 and Lys-367 each carry N6-acetyllysine.

Belongs to the class-I aminoacyl-tRNA synthetase family. In terms of assembly, homodimer.

It is found in the mitochondrion matrix. The enzyme catalyses tRNA(Tyr) + L-tyrosine + ATP = L-tyrosyl-tRNA(Tyr) + AMP + diphosphate + H(+). In terms of biological role, catalyzes the attachment of tyrosine to tRNA(Tyr) in a two-step reaction: tyrosine is first activated by ATP to form Tyr-AMP and then transferred to the acceptor end of tRNA(Tyr). In Homo sapiens (Human), this protein is Tyrosine--tRNA ligase, mitochondrial (YARS2).